The chain runs to 73 residues: Large ribosomal subunit protein bL31 (73 aa).

Residues C16, C18, C37, and C40 each contribute to the Zn(2+) site.

It belongs to the bacterial ribosomal protein bL31 family. Type A subfamily. Part of the 50S ribosomal subunit. Zn(2+) serves as cofactor.

Its function is as follows. Binds the 23S rRNA. This is Large ribosomal subunit protein bL31 from Blochmanniella floridana.